A 66-amino-acid polypeptide reads, in one-letter code: UPF0337 protein spyM18_1212 (66 aa).

Belongs to the UPF0337 (CsbD) family.

This is UPF0337 protein spyM18_1212 from Streptococcus pyogenes serotype M18 (strain MGAS8232).